A 297-amino-acid polypeptide reads, in one-letter code: ATP synthase subunit a (297 aa).

8 helical membrane-spanning segments follow: residues 38-58 (PLIPTAHVLSIFMVLFMIAIL), 77-97 (GYVLVVQLLILQFENLTVDLL), 107-127 (LFIIIFVYILISNLMSMVGGI), 133-153 (SSTVTFSLGLMSFFGTFIMGV), 174-194 (TIPLMINPLNVIGYFAPLLSI), 202-222 (VLAGSIFIALLYSLFRTFFTL), 230-250 (VGLVFGTLAGGLVIPAFHVYF), and 252-272 (ILVSAIQAFVFVSLMLTYWSQ).

Belongs to the ATPase A chain family. F-type ATPases have 2 components, CF(1) - the catalytic core - and CF(0) - the membrane proton channel. CF(1) has five subunits: alpha(3), beta(3), gamma(1), delta(1), epsilon(1). CF(0) has three main subunits: a(1), b(2) and c(9-12). The alpha and beta chains form an alternating ring which encloses part of the gamma chain. CF(1) is attached to CF(0) by a central stalk formed by the gamma and epsilon chains, while a peripheral stalk is formed by the delta and b chains.

The protein resides in the cell membrane. In terms of biological role, key component of the proton channel; it plays a direct role in the translocation of protons across the membrane. This is ATP synthase subunit a from Mycoplasmoides gallisepticum (strain R(low / passage 15 / clone 2)) (Mycoplasma gallisepticum).